A 72-amino-acid polypeptide reads, in one-letter code: MKASKIREMTNQELHNELKKLKNELFNLRFQLATNQLENPMRIREVKRTIARIKTILRERELEQEKANKNAK.

This sequence belongs to the universal ribosomal protein uL29 family.

The polypeptide is Large ribosomal subunit protein uL29 (Caldicellulosiruptor saccharolyticus (strain ATCC 43494 / DSM 8903 / Tp8T 6331)).